The following is a 396-amino-acid chain: Alanine racemase (396 aa).

The active-site Proton acceptor; specific for D-alanine is K46. Position 46 is an N6-(pyridoxal phosphate)lysine (K46). R145 is a binding site for substrate. Catalysis depends on Y280, which acts as the Proton acceptor; specific for L-alanine. M328 provides a ligand contact to substrate.

Belongs to the alanine racemase family. Pyridoxal 5'-phosphate serves as cofactor.

It catalyses the reaction L-alanine = D-alanine. It functions in the pathway amino-acid biosynthesis; D-alanine biosynthesis; D-alanine from L-alanine: step 1/1. Functionally, catalyzes the interconversion of L-alanine and D-alanine. May also act on other amino acids. The polypeptide is Alanine racemase (alr) (Brucella canis (strain ATCC 23365 / NCTC 10854 / RM-666)).